A 239-amino-acid polypeptide reads, in one-letter code: MLKQTLLYTGKAKSVYETDSADHLILVFRDDASAFNGEKIEQLDRKGKVNNRFNAFIMEKLAEAGIETHFEKLLTPNEVLVKKLNMIPVECVIRNYAAGSLCRRLGVEEGKQLTPPTFELFFKDDALGDPMVNESQAIALGWATADQLEKMKELTYQVNDVLKALFDAGNMILVDFKLEFGVFHDRIVLGDEFSPDGCRLWDKDTKKKLDKDRFRQGLGGVVEAYEEVAARLGINLDDI.

Belongs to the SAICAR synthetase family.

The catalysed reaction is 5-amino-1-(5-phospho-D-ribosyl)imidazole-4-carboxylate + L-aspartate + ATP = (2S)-2-[5-amino-1-(5-phospho-beta-D-ribosyl)imidazole-4-carboxamido]succinate + ADP + phosphate + 2 H(+). It functions in the pathway purine metabolism; IMP biosynthesis via de novo pathway; 5-amino-1-(5-phospho-D-ribosyl)imidazole-4-carboxamide from 5-amino-1-(5-phospho-D-ribosyl)imidazole-4-carboxylate: step 1/2. This Acinetobacter baylyi (strain ATCC 33305 / BD413 / ADP1) protein is Phosphoribosylaminoimidazole-succinocarboxamide synthase.